Here is a 147-residue protein sequence, read N- to C-terminus: Receptor activity-modifying protein 3 (147 aa).

The signal sequence occupies residues 1-22; that stretch reads MKTPAQRLHLLPLLLLLCGECA. Topologically, residues 23 to 112 are extracellular; it reads QVCGCNETGM…CTVDRTHWED (90 aa). Asparagine 28, asparagine 57, asparagine 70, and asparagine 102 each carry an N-linked (GlcNAc...) asparagine glycan. 2 cysteine pairs are disulfide-bonded: cysteine 39–cysteine 71 and cysteine 56–cysteine 103. Residues 113–137 traverse the membrane as a helical segment; the sequence is PPDEVLIPLIAVPVVLTVAMAGLVV. The Cytoplasmic segment spans residues 138–147; it reads WRSKHTDRLL.

The protein belongs to the RAMP family. As to quaternary structure, heterodimer of CALCRL and RAMP3; interaction induces allosteric modulation of CALCRL function and ligand specificity for adrenomedullin/ADM and intermedin/ADM2. Heterodimer of CALCR and RAMP3; interaction form the receptor complex AMYR3 for amylin/IAPP. Interacts with GPER1. Expressed predominantly in the testis, embryonic and adult brain and in kidney.

The protein resides in the cell membrane. It localises to the membrane. Accessory protein that interacts with and modulates the function of G-protein coupled receptors including calcitonin gene-related peptide type 1 receptor (CALCRL), calcitonin receptor (CALCR) and G-protein coupled estrogen receptor 1 (GPER1). Required for the transport of CALCRL and GPER1 receptors to the plasma membrane. Plays a role in cardioprotection by reducing cardiac hypertrophy and perivascular fibrosis in a GPER1-dependent manner. Together with CALCRL, form a receptor complex for adrenomedullin/ADM and intermedin/ADM2. Together with CALCR, act as a receptor complex for amylin/IAPP. The sequence is that of Receptor activity-modifying protein 3 from Mus musculus (Mouse).